The following is a 710-amino-acid chain: MPVRRYGGRYNNSSPGVSNALSPSTTAGRPLSPSPAAGSKLASTHHDPVPQEAYYVNDEADAWHQQQAPFREPSVEVEVEMIDDEPPHGSQKSLSVAPYTANASSSSGRSKRNAITASGYTFYTNERQKTVYEALRSLRPLAELQEPRRVKEYAETSLKDSLYRIIEAHDVIMVAGAFFGDEGKGKTVDAVAHHPLCTCIARVNSGENAGHTVYDKAGRKFVFNLAPSGLLLPGKRNYIGPECVMDPVSFMEKEIIQLIDAGIDYRDRLFIGNVCIVTPYHKLLDLLGSAANSSTLKGMAPVHGSKVMKRGIRLDHIFNDDETLRKRLEKDMDTYLGLLKVKNLSDADVVRLCREENSDGVVRVPDYVIAFAQAKDKVEFLVKLYRDRVRHNPDFPARCDVTYELHAAVLRGEKVLLEGPQSYWLSNARTKFWESTTSADTTAAGLLAASQLNFQKFKSVVLNVHKAPGSSRVGIGACPSSFVPQDYFSAQNIKTLRDLPSETCANFEAVQRTLFRDGFPHSNDKARHNGIMAPVEYSDETGKYNIGVAMAIASAQHHGECGAVTKKPRVCGFFDCVLQHEVNSIQGPYLTISALDRGDEYDKVGVTIAYVYYNPEGKQVDVNGHVYKNGDIIRAGDPVPSEPALYHCHPIVKLIDGWRDNPIAAAKRRRNAPLPRGVCELLSTIEYFTNCKILSIGNGPNGDDIIYLRQ.

Disordered regions lie at residues 1 to 51 (MPVR…PVPQ) and 84 to 111 (DEPP…GRSK). Composition is skewed to polar residues over residues 10–27 (YNNS…STTA) and 101–111 (ANASSSSGRSK). Residues 180–186 (GDEGKGK) and 210–212 (GHT) each bind GTP. D181 serves as the catalytic Proton acceptor. Positions 181 and 210 each coordinate Mg(2+). IMP is bound by residues 181 to 184 (DEGK), 208 to 211 (NAGH), T295, K309, Q421, T437, and K567. H211 (proton donor) is an active-site residue. Residue 563 to 569 (AVTKKPR) coordinates substrate. GTP is bound by residues R569 and 697–699 (GNG).

The protein belongs to the adenylosuccinate synthetase family. Homodimer. The cofactor is Mg(2+).

Its subcellular location is the cytoplasm. It catalyses the reaction IMP + L-aspartate + GTP = N(6)-(1,2-dicarboxyethyl)-AMP + GDP + phosphate + 2 H(+). Its pathway is purine metabolism; AMP biosynthesis via de novo pathway; AMP from IMP: step 1/2. Functionally, plays an important role in the salvage pathway for purine nucleotide biosynthesis. Catalyzes the first committed step in the biosynthesis of AMP from IMP. The sequence is that of Adenylosuccinate synthetase from Leishmania infantum.